The sequence spans 80 residues: uncharacterized protein (80 aa).

This is an uncharacterized protein from Schizosaccharomyces pombe (strain 972 / ATCC 24843) (Fission yeast).